We begin with the raw amino-acid sequence, 304 residues long: Homoserine O-succinyltransferase (304 aa).

The Acyl-thioester intermediate role is filled by C142. Substrate contacts are provided by K163 and S192. H235 acts as the Proton acceptor in catalysis. Residue E237 is part of the active site. R249 is a substrate binding site.

It belongs to the MetA family.

Its subcellular location is the cytoplasm. The catalysed reaction is L-homoserine + succinyl-CoA = O-succinyl-L-homoserine + CoA. Its pathway is amino-acid biosynthesis; L-methionine biosynthesis via de novo pathway; O-succinyl-L-homoserine from L-homoserine: step 1/1. Transfers a succinyl group from succinyl-CoA to L-homoserine, forming succinyl-L-homoserine. This chain is Homoserine O-succinyltransferase, found in Blochmanniella pennsylvanica (strain BPEN).